We begin with the raw amino-acid sequence, 396 residues long: S-adenosylmethionine synthase 3 (396 aa).

Mg(2+) is bound at residue E13. ATP is bound at residue H19. Residue E47 coordinates K(+). Residues E60 and Q103 each contribute to the L-methionine site. ATP contacts are provided by residues 171–173 (DGK), 239–242 (SGRF), D250, 256–257 (RK), A273, K277, and K281. D250 is an L-methionine binding site. K281 is an L-methionine binding site.

It belongs to the AdoMet synthase family. As to quaternary structure, homotetramer. The cofactor is Mn(2+). Mg(2+) serves as cofactor. It depends on Co(2+) as a cofactor. Requires K(+) as cofactor. In terms of tissue distribution, expressed in roots, stems and leaves (at protein level).

The protein resides in the cytoplasm. The enzyme catalyses L-methionine + ATP + H2O = S-adenosyl-L-methionine + phosphate + diphosphate. It functions in the pathway amino-acid biosynthesis; S-adenosyl-L-methionine biosynthesis; S-adenosyl-L-methionine from L-methionine: step 1/1. Its function is as follows. Catalyzes the formation of S-adenosylmethionine from methionine and ATP. The reaction comprises two steps that are both catalyzed by the same enzyme: formation of S-adenosylmethionine (AdoMet) and triphosphate, and subsequent hydrolysis of the triphosphate. May be involved in the synthesis of betain in response to abiotic stress such as high salinity. This Atriplex nummularia (Old man saltbush) protein is S-adenosylmethionine synthase 3 (SAMS3).